The following is a 192-amino-acid chain: Ion-translocating oxidoreductase complex subunit B (192 aa).

A hydrophobic region spans residues 1 to 26 (MNTIWIAVGALTLLGLVFGAILGYAS). Positions 32 to 91 (EDDPVVEKIDAILPQSQCGQCGYPGCRPYAEAVGLQGEKINRCAPGGEAVMLKMAELLNV) constitute a 4Fe-4S domain. Positions 49, 52, 57, 74, 117, 120, 123, 127, 147, 150, 153, and 157 each coordinate [4Fe-4S] cluster. 2 consecutive 4Fe-4S ferredoxin-type domains span residues 108–137 (MLAV…GATR) and 138–167 (AMHT…LRPV).

It belongs to the 4Fe4S bacterial-type ferredoxin family. RnfB subfamily. In terms of assembly, the complex is composed of six subunits: RsxA, RsxB, RsxC, RsxD, RsxE and RsxG. [4Fe-4S] cluster is required as a cofactor.

It localises to the cell inner membrane. Part of a membrane-bound complex that couples electron transfer with translocation of ions across the membrane. Required to maintain the reduced state of SoxR. The sequence is that of Ion-translocating oxidoreductase complex subunit B from Salmonella agona (strain SL483).